Consider the following 396-residue polypeptide: (S)-8-oxocitronellyl enol synthase ISY2 (396 aa).

NADP(+)-binding positions include 38–40, 66–67, 84–85, 108–109, Q146, Y182, I209, and 216–218; these read TGL, RR, DV, TW, and SMM. Y182 is a catalytic residue.

The protein belongs to the short-chain dehydrogenases/reductases (SDR) family.

The catalysed reaction is (S)-8-oxocitronellyl enol + NADP(+) = (6E)-8-oxogeranial + NADPH + H(+). It carries out the reaction (S)-8-oxocitronellyl enol + NAD(+) = (6E)-8-oxogeranial + NADH + H(+). Its function is as follows. Iridoid synthase that catalyzes the first step in generation of the iridoid ring scaffold using the linear monoterpene (6E)-8-oxogeranial as substrate. Iridoids comprise a large family of distinctive bicyclic monoterpenes that possess a wide range of pharmacological activities, including anticancer, anti-inflammatory, antifungal and antibacterial activities. Catalyzes the conversion of the linear monoterpene (6E)-8-oxogeranial to (S)-8-oxocitronellyl enol, a precursor of nepetalactones, which are metabolites that are both insect-repellent and have euphoric effect in cats. The protein is (S)-8-oxocitronellyl enol synthase ISY2 of Nepeta racemosa (Catmint).